The following is a 428-amino-acid chain: Glutamate-1-semialdehyde 2,1-aminomutase (428 aa).

N6-(pyridoxal phosphate)lysine is present on K265.

It belongs to the class-III pyridoxal-phosphate-dependent aminotransferase family. HemL subfamily. In terms of assembly, homodimer. Requires pyridoxal 5'-phosphate as cofactor.

The protein localises to the cytoplasm. The enzyme catalyses (S)-4-amino-5-oxopentanoate = 5-aminolevulinate. Its pathway is porphyrin-containing compound metabolism; protoporphyrin-IX biosynthesis; 5-aminolevulinate from L-glutamyl-tRNA(Glu): step 2/2. The protein is Glutamate-1-semialdehyde 2,1-aminomutase of Shewanella sediminis (strain HAW-EB3).